The sequence spans 481 residues: F-box/FBD/LRR-repeat protein At5g18770 (481 aa).

Residues 23–69 (EDMISALPDHLLCHILIFLSTDESVLTSVLSSRWRNLWKWVPRLDLN) enclose the F-box domain. LRR repeat units lie at residues 126–153 (KPNV…TLSA), 159–185 (CLKL…YLED), 186–211 (VVFP…KLSL), 214–234 (DDVV…TLKR), 236–261 (VPVY…SLID), 289–314 (DELS…TISW), and 340–368 (ATMS…HFTL). The 53-residue stretch at 378–430 (VITGFSRVLPRCLVFSLESVEMESPITEKATELKLVRYFLENSATLKKLVLLL) folds into the FBD domain.

This Arabidopsis thaliana (Mouse-ear cress) protein is F-box/FBD/LRR-repeat protein At5g18770.